We begin with the raw amino-acid sequence, 409 residues long: TAR DNA-binding protein 43 (409 aa).

RRM domains are found at residues 105-200 and 191-262; these read SDLI…RCTE and RKVF…TAEP. Disordered stretches follow at residues 260 to 302 and 341 to 409; these read AEPK…NQGG and SQQN…GWGM. The span at 261-274 shows a compositional bias: basic and acidic residues; it reads EPKHNNNRQLERGG. Polar residues predominate over residues 281–292; that stretch reads FGNQGYPNSRPS. Composition is skewed to low complexity over residues 341–387 and 395–409; these read SQQN…PNAG and GFSS…GWGM.

In terms of assembly, homodimer.

The protein resides in the nucleus. The protein localises to the cytoplasm. It localises to the stress granule. It is found in the mitochondrion. In terms of biological role, probably involved in transcriptional repression. May play a role in the maintenance of the circadian clock periodicity. This is TAR DNA-binding protein 43 (tardbp) from Xenopus tropicalis (Western clawed frog).